A 156-amino-acid polypeptide reads, in one-letter code: FUN14 domain-containing protein 1 (156 aa).

A YXXL motif is present at residues 19 to 22 (YEVL). 3 helical membrane passes run 49 to 69 (YSVA…GFLF), 76 to 96 (AATA…SGYV), and 135 to 155 (FIKQ…LGLA).

Belongs to the FUN14 family.

The protein resides in the mitochondrion outer membrane. Its function is as follows. Acts as an activator of hypoxia-induced mitophagy, an important mechanism for mitochondrial quality control. The chain is FUN14 domain-containing protein 1 (FUNDC1) from Gallus gallus (Chicken).